The sequence spans 57 residues: Aspartyl-phosphate phosphatase YnzD (57 aa).

Belongs to the spo0E family.

Aspartyl-phosphate phosphatase which specifically dephosphorylates the sporulation transcription factor Spo0A-P and negatively regulates the sporulation initiation pathway in order to control the proper timing of sporulation. This Bacillus subtilis (strain 168) protein is Aspartyl-phosphate phosphatase YnzD (ynzD).